Consider the following 101-residue polypeptide: Pro-corazonin (101 aa).

Residues methionine 1–cysteine 16 form the signal peptide. Position 27 is an asparagine amide (asparagine 27). A propeptide spanning residues serine 31 to tyrosine 101 is cleaved from the precursor.

The protein belongs to the corazonin family. As to expression, expressed in central brain and the retrocerebral complex but not in antennal lobes, optic lobes or in gnathal, thoracic and abdominal ganglia (at protein level).

The protein localises to the secreted. Its function is as follows. Cardioactive peptide. Corazonin is probably involved in the physiological regulation of the heart beat. This Camponotus floridanus (Florida carpenter ant) protein is Pro-corazonin.